The sequence spans 331 residues: Probable tRNA pseudouridine synthase B (331 aa).

The Nucleophile role is filled by D66. The PUA domain maps to 233–307; it reads INKIIVKDSA…NEEDNREKYK (75 aa).

It belongs to the pseudouridine synthase TruB family. Type 2 subfamily.

The enzyme catalyses uridine(55) in tRNA = pseudouridine(55) in tRNA. Functionally, could be responsible for synthesis of pseudouridine from uracil-55 in the psi GC loop of transfer RNAs. The polypeptide is Probable tRNA pseudouridine synthase B (Methanococcus aeolicus (strain ATCC BAA-1280 / DSM 17508 / OCM 812 / Nankai-3)).